Reading from the N-terminus, the 196-residue chain is MSRVYVGNLDPRVTERELEDEFRSFGVIRSVWVARRPPGYAFLDFEDSRDARDAIREVDGKNGWRVEQSHNRGGGGGRGGGRGGGDGGRGRGGSDLKCYECGESGHFARECRSRGGSGGRRRSRSRSRSPPRYRKSPTYGGRRSYSPRARSPPPPRRRSPSPRGRNYSRSPPPYRARDEVPYANGNGLKDVRRSRS.

One can recognise an RRM domain in the interval 2–71 (SRVYVGNLDP…NGWRVEQSHN (70 aa)). Ser-48 bears the Phosphoserine mark. Residues 58–70 (VDGKNGWRVEQSH) are compositionally biased toward basic and acidic residues. Positions 58–196 (VDGKNGWRVE…GLKDVRRSRS (139 aa)) are disordered. Over residues 72–87 (RGGGGGRGGGRGGGDG) the composition is skewed to gly residues. Residues 88-100 (GRGRGGSDLKCYE) are compositionally biased toward basic and acidic residues. A CCHC-type zinc finger spans residues 96-113 (LKCYECGESGHFARECRS). Basic residues predominate over residues 119 to 135 (GRRRSRSRSRSPPRYRK). 7 positions are modified to phosphoserine: Ser-136, Ser-144, Ser-146, Ser-151, Ser-159, Ser-170, and Ser-196. The span at 139–149 (YGGRRSYSPRA) shows a compositional bias: low complexity.

The protein belongs to the splicing factor SR family. RSZ subfamily. Component of the spliceosome. In terms of processing, extensively phosphorylated on serine residues in the RS domain.

The protein resides in the nucleus. Probably involved in intron recognition and spliceosome assembly. The protein is Serine/arginine-rich splicing factor RSZ22A (RSZ22A) of Arabidopsis thaliana (Mouse-ear cress).